The following is a 47-amino-acid chain: Small, acid-soluble spore protein N (47 aa).

A disordered region spans residues Met1–Glu47.

This sequence belongs to the SspN family.

The protein resides in the spore core. The sequence is that of Small, acid-soluble spore protein N from Bacillus licheniformis (strain ATCC 14580 / DSM 13 / JCM 2505 / CCUG 7422 / NBRC 12200 / NCIMB 9375 / NCTC 10341 / NRRL NRS-1264 / Gibson 46).